Here is an 85-residue protein sequence, read N- to C-terminus: MAHKKAGGSTKNGRDSQSKRLGVKRYGGESVSAGSIIVRQRGTHFHAGENVGVGKDYTLFAKSDGRVVFERKGPAQRRRVRIEAA.

Residues 1–27 are disordered; it reads MAHKKAGGSTKNGRDSQSKRLGVKRYG.

It belongs to the bacterial ribosomal protein bL27 family.

This chain is Large ribosomal subunit protein bL27, found in Halorhodospira halophila (strain DSM 244 / SL1) (Ectothiorhodospira halophila (strain DSM 244 / SL1)).